A 675-amino-acid polypeptide reads, in one-letter code: Potassium-transporting ATPase ATP-binding subunit (675 aa).

4 consecutive transmembrane segments (helical) span residues 38–58 (VMFVVYLGTALTAYLTVANLV), 67–87 (LAITLLLLLTVLFANFAEGMA), 216–236 (IALSILLSGLTLIFLLAVVTL), and 253–273 (IALLVCLIPTTIGGLLPAIGI). Residue D304 is the 4-aspartylphosphate intermediate of the active site. ATP is bound by residues D341, E345, 371–378 (FTAQTRMS), and K389. Mg(2+) is bound by residues D512 and D516. Transmembrane regions (helical) follow at residues 582–602 (FAILPALFVTAYPQLGVLNVM), 610–630 (AVLSAVIFNALIIPVLIPLAL), and 654–674 (GGILVPFIAIKLIDLLIGGLM).

The protein belongs to the cation transport ATPase (P-type) (TC 3.A.3) family. Type IA subfamily. In terms of assembly, the system is composed of three essential subunits: KdpA, KdpB and KdpC.

The protein localises to the cell membrane. The enzyme catalyses K(+)(out) + ATP + H2O = K(+)(in) + ADP + phosphate + H(+). Its function is as follows. Part of the high-affinity ATP-driven potassium transport (or Kdp) system, which catalyzes the hydrolysis of ATP coupled with the electrogenic transport of potassium into the cytoplasm. This subunit is responsible for energy coupling to the transport system and for the release of the potassium ions to the cytoplasm. This is Potassium-transporting ATPase ATP-binding subunit from Deinococcus radiodurans (strain ATCC 13939 / DSM 20539 / JCM 16871 / CCUG 27074 / LMG 4051 / NBRC 15346 / NCIMB 9279 / VKM B-1422 / R1).